The sequence spans 134 residues: Putative nickel-responsive regulator (134 aa).

Ni(2+) contacts are provided by histidine 78, histidine 89, histidine 91, and cysteine 97.

This sequence belongs to the transcriptional regulatory CopG/NikR family. It depends on Ni(2+) as a cofactor.

In terms of biological role, transcriptional regulator. The polypeptide is Putative nickel-responsive regulator (Chlorobaculum tepidum (strain ATCC 49652 / DSM 12025 / NBRC 103806 / TLS) (Chlorobium tepidum)).